Here is a 282-residue protein sequence, read N- to C-terminus: Putative hydrolase BceJ2315_61450 (282 aa).

Residues Glu-124, Glu-126, and Asp-155 each contribute to the Mg(2+) site.

It belongs to the FAH family. The cofactor is Mg(2+).

This Burkholderia cenocepacia (strain ATCC BAA-245 / DSM 16553 / LMG 16656 / NCTC 13227 / J2315 / CF5610) (Burkholderia cepacia (strain J2315)) protein is Putative hydrolase BceJ2315_61450.